The sequence spans 169 residues: Probable calcium-binding protein CML13 (169 aa).

Positions 1–26 are disordered; that stretch reads MSTVKGQTRRERPRGARPHGLTKQKR. Basic residues predominate over residues 15-24; it reads GARPHGLTKQ. EF-hand domains follow at residues 24–59, 60–95, 97–132, and 133–168; these read QKRQ…LGFE, MTEE…KIGE, DSKE…LGEN, and FTYQ…TGYG. Residues D37, D39, S41, T43, E48, D73, D75, S77, S79, E84, D110, D112, N114, K116, D121, D146, N148, D150, E152, and E157 each contribute to the Ca(2+) site.

Functionally, potential calcium sensor. This is Probable calcium-binding protein CML13 (CML13) from Oryza sativa subsp. japonica (Rice).